A 233-amino-acid chain; its full sequence is Uracil-DNA glycosylase (233 aa).

D70 acts as the Proton acceptor in catalysis.

The protein belongs to the uracil-DNA glycosylase (UDG) superfamily. UNG family.

The protein resides in the cytoplasm. It carries out the reaction Hydrolyzes single-stranded DNA or mismatched double-stranded DNA and polynucleotides, releasing free uracil.. Functionally, excises uracil residues from the DNA which can arise as a result of misincorporation of dUMP residues by DNA polymerase or due to deamination of cytosine. This is Uracil-DNA glycosylase from Helicobacter pylori (strain P12).